We begin with the raw amino-acid sequence, 280 residues long: MELCGFEVGLERALFLIAGPCVIESEQLALDTAGRLKEMTERLGIPFIYKSSFDKANRTAVESFRGLGMEAGLGILEKVKATLGVPVLTDVHEDTPLQEVAAVVDVLQTPAFLCRQTNFIQNVARQGRPVNIKKGQFLAPWDMKHVVEKARAVGNQQIMVCERGVSFGYNTLVSDMRSLAVMRDTGCPVVFDATHSVQQPGGKGGCSGGQREWVPVLARAAVAAGVAGVFMETHPDPERALSDGPNAWPLGAMEKLLETLSTIDKTVKTDGFLEAEYRLN.

The protein belongs to the KdsA family.

Its subcellular location is the cytoplasm. It catalyses the reaction D-arabinose 5-phosphate + phosphoenolpyruvate + H2O = 3-deoxy-alpha-D-manno-2-octulosonate-8-phosphate + phosphate. Its pathway is carbohydrate biosynthesis; 3-deoxy-D-manno-octulosonate biosynthesis; 3-deoxy-D-manno-octulosonate from D-ribulose 5-phosphate: step 2/3. The protein operates within bacterial outer membrane biogenesis; lipopolysaccharide biosynthesis. This Nitrosococcus oceani (strain ATCC 19707 / BCRC 17464 / JCM 30415 / NCIMB 11848 / C-107) protein is 2-dehydro-3-deoxyphosphooctonate aldolase.